A 472-amino-acid polypeptide reads, in one-letter code: Proline--tRNA ligase (472 aa).

It belongs to the class-II aminoacyl-tRNA synthetase family. ProS type 3 subfamily. As to quaternary structure, homodimer.

It localises to the cytoplasm. It carries out the reaction tRNA(Pro) + L-proline + ATP = L-prolyl-tRNA(Pro) + AMP + diphosphate. Catalyzes the attachment of proline to tRNA(Pro) in a two-step reaction: proline is first activated by ATP to form Pro-AMP and then transferred to the acceptor end of tRNA(Pro). The protein is Proline--tRNA ligase of Ureaplasma urealyticum serovar 10 (strain ATCC 33699 / Western).